The following is a 29-amino-acid chain: Cyclotide mech-7 (29 aa).

A cross-link (cyclopeptide (Gly-Asp)) is located at residues G1–D29. 3 disulfide bridges follow: C5-C19, C9-C21, and C14-C26.

Post-translationally, this is a cyclic peptide. In terms of processing, contains 3 disulfide bonds.

Functionally, probably participates in a plant defense mechanism (Potential). Binds to and induces leakage in phospholipd membranes, particularly ones containing 1-palmitoyl-2-oleophosphatidylethanolamine (POPE). The polypeptide is Cyclotide mech-7 (Melicytus chathamicus (Chatham Island mahoe)).